We begin with the raw amino-acid sequence, 353 residues long: MTATLERRESASLWGRFCDWITSTENRLYIGWFGVLMIPTLLTATSVFIIAFVAAPPVDIDGIREPVSGSLLYGNNIISGAIIPTSAAIGLHFYPIWEAASVDEWLYNGGPYELIVLHFLLGVACYMGREWELSFRLGMRPWIAVAYSAPVAAAAAVFLIYPIGQGSFSDGMPLGISGTFNFMIVFQAEHNILMHPFHMLGVAGVFGGSLFSAMHGSLVTSSLIRETTENESANAGYKFGQEEETYNIVAAHGYFGRLIFQYASFNNSRSLHFFLAAWPVVGIWFTALGISTMAFNLNGFNFNQSVVDSQGRVINTWADIINRANLGMEVMHERNAHNFPLDLASVDAPSING.

Threonine 2 is subject to N-acetylthreonine. The residue at position 2 (threonine 2) is a Phosphothreonine. Helical transmembrane passes span 29–46, 118–133, and 142–156; these read YIGW…TATS, HFLL…EWEL, and WIAV…AAAA. A chlorophyll a-binding site is contributed by histidine 118. Tyrosine 126 is a binding site for pheophytin a. Positions 170 and 189 each coordinate [CaMn4O5] cluster. A helical membrane pass occupies residues 197-218; that stretch reads FHMLGVAGVFGGSLFSAMHGSL. Residue histidine 198 participates in chlorophyll a binding. Residues histidine 215 and 264–265 each bind a quinone; that span reads SF. Fe cation is bound at residue histidine 215. Fe cation is bound at residue histidine 272. Residues 274 to 288 form a helical membrane-spanning segment; it reads FLAAWPVVGIWFTAL. [CaMn4O5] cluster is bound by residues histidine 332, glutamate 333, aspartate 342, and alanine 344. Positions 345 to 353 are excised as a propeptide; the sequence is SVDAPSING.

This sequence belongs to the reaction center PufL/M/PsbA/D family. As to quaternary structure, PSII is composed of 1 copy each of membrane proteins PsbA, PsbB, PsbC, PsbD, PsbE, PsbF, PsbH, PsbI, PsbJ, PsbK, PsbL, PsbM, PsbT, PsbX, PsbY, PsbZ, Psb30/Ycf12, at least 3 peripheral proteins of the oxygen-evolving complex and a large number of cofactors. It forms dimeric complexes. The D1/D2 heterodimer binds P680, chlorophylls that are the primary electron donor of PSII, and subsequent electron acceptors. It shares a non-heme iron and each subunit binds pheophytin, quinone, additional chlorophylls, carotenoids and lipids. D1 provides most of the ligands for the Mn4-Ca-O5 cluster of the oxygen-evolving complex (OEC). There is also a Cl(-1) ion associated with D1 and D2, which is required for oxygen evolution. The PSII complex binds additional chlorophylls, carotenoids and specific lipids. serves as cofactor. In terms of processing, tyr-161 forms a radical intermediate that is referred to as redox-active TyrZ, YZ or Y-Z. C-terminally processed by CTPA; processing is essential to allow assembly of the oxygen-evolving complex and thus photosynthetic growth.

It is found in the plastid. The protein localises to the chloroplast thylakoid membrane. It catalyses the reaction 2 a plastoquinone + 4 hnu + 2 H2O = 2 a plastoquinol + O2. Its function is as follows. Photosystem II (PSII) is a light-driven water:plastoquinone oxidoreductase that uses light energy to abstract electrons from H(2)O, generating O(2) and a proton gradient subsequently used for ATP formation. It consists of a core antenna complex that captures photons, and an electron transfer chain that converts photonic excitation into a charge separation. The D1/D2 (PsbA/PsbD) reaction center heterodimer binds P680, the primary electron donor of PSII as well as several subsequent electron acceptors. This Adiantum capillus-veneris (Maidenhair fern) protein is Photosystem II protein D1.